Reading from the N-terminus, the 336-residue chain is Fructose-1,6-bisphosphatase class 1 (336 aa).

The Mg(2+) site is built by Glu-92, Asp-115, Leu-117, and Asp-118. Residues 118–121, Asn-211, Tyr-244, 262–264, and Lys-274 contribute to the substrate site; these read DGSS and YLY. Glu-280 is a Mg(2+) binding site.

The protein belongs to the FBPase class 1 family. As to quaternary structure, homotetramer. Mg(2+) is required as a cofactor.

Its subcellular location is the cytoplasm. The enzyme catalyses beta-D-fructose 1,6-bisphosphate + H2O = beta-D-fructose 6-phosphate + phosphate. It participates in carbohydrate biosynthesis; gluconeogenesis. The protein is Fructose-1,6-bisphosphatase class 1 of Hahella chejuensis (strain KCTC 2396).